A 409-amino-acid chain; its full sequence is Probable ferredoxin reductase CtmF (409 aa).

FAD-binding residues include Ala-15, Asp-37, Lys-50, Val-83, Asp-279, and Val-298.

Belongs to the FAD-dependent oxidoreductase family. It depends on FAD as a cofactor.

The protein operates within terpene metabolism; monoterpene degradation. Its function is as follows. Involved in the degradation of the cyclic monoterpene limonene. Probably part of an electron transfer system involved in the oxidation of limonene to perillyl alcohol. The chain is Probable ferredoxin reductase CtmF from Castellaniella defragrans (strain DSM 12143 / CCUG 39792 / 65Phen) (Alcaligenes defragrans).